The sequence spans 181 residues: Der GTPase-activating protein YihI (181 aa).

Disordered stretches follow at residues 1-75 (MSRK…KKIP) and 145-181 (EPEA…DYKG). Positions 32-43 (RLRKKDKKRKGL) are enriched in basic residues. Residues 146-155 (PEAEEEFEDE) are compositionally biased toward acidic residues. Over residues 156–165 (APVRKSRSDD) the composition is skewed to basic and acidic residues. Residues 166 to 181 (DLLADFEDFDMDDYKG) show a composition bias toward acidic residues.

This sequence belongs to the YihI family. Interacts with Der.

Its function is as follows. A GTPase-activating protein (GAP) that modifies Der/EngA GTPase function. May play a role in ribosome biogenesis. In Vibrio vulnificus (strain YJ016), this protein is Der GTPase-activating protein YihI.